A 177-amino-acid chain; its full sequence is uncharacterized protein (177 aa).

The protein to Synechocystis PCC 6803 slr1290 and sll0925.

This is an uncharacterized protein from Synechocystis sp. (strain ATCC 27184 / PCC 6803 / Kazusa).